Consider the following 440-residue polypeptide: Endoglucanase B (440 aa).

The N-terminal stretch at 1–33 is a signal peptide; it reads MNKRLSRGKISLLASVFVTTTFMGGVNVLASTA. Glu179 (proton donor) is an active-site residue. The active-site Nucleophile is Glu305. Residues 381-440 enclose the Dockerin domain; sequence TSYSLGDVNKDGKVNAIDYAVLKSILLGTNTNVDLSVSDMNKDGKVNALDLAVLKKMLLS.

It belongs to the glycosyl hydrolase 5 (cellulase A) family.

The catalysed reaction is Endohydrolysis of (1-&gt;4)-beta-D-glucosidic linkages in cellulose, lichenin and cereal beta-D-glucans.. It carries out the reaction Endohydrolysis of (1-&gt;4)-beta-D-xylosidic linkages in xylans.. Has endoglucanase activity on carboxymethyl-cellulose (CMC), xylan and lichenan, but not Avicel. The chain is Endoglucanase B (engB) from Clostridium cellulovorans (strain ATCC 35296 / DSM 3052 / OCM 3 / 743B).